A 235-amino-acid polypeptide reads, in one-letter code: Homeobox-leucine zipper protein ATHB-12 (235 aa).

Residues 27–86 (KSNNQKRFSEEQIKSLELIFESETRLEPRKKVQVARELGLQPRQVAIWFQNKRARWKTKQ) constitute a DNA-binding region (homeobox). The tract at residues 87–122 (LEKEYNTLRANYNNLASQFEIMKKEKQSLVSELQRL) is leucine-zipper. Basic and acidic residues-rich tracts occupy residues 128–138 (RPKEEKHHECC) and 152–162 (HNGKSEPEGRL). Residues 128–167 (RPKEEKHHECCGDQGLALSSSTESHNGKSEPEGRLDQGSV) are disordered.

Belongs to the HD-ZIP homeobox family. Class I subfamily. As to quaternary structure, interacts with TFIIB1. In terms of tissue distribution, widely expressed.

The protein resides in the nucleus. In terms of biological role, probable transcription activator that may act as growth regulators in response to water deficit. The polypeptide is Homeobox-leucine zipper protein ATHB-12 (ATHB-12) (Arabidopsis thaliana (Mouse-ear cress)).